A 137-amino-acid polypeptide reads, in one-letter code: Small ribosomal subunit protein uS9 (137 aa).

A compositionally biased stretch (basic and acidic residues) spans 105-117 (LKIEGHLSRDPRA). Residues 105-137 (LKIEGHLSRDPRAKERRKYGLKKARKAPQFSKR) are disordered. Residues 118-137 (KERRKYGLKKARKAPQFSKR) are compositionally biased toward basic residues.

It belongs to the universal ribosomal protein uS9 family.

This is Small ribosomal subunit protein uS9 from Prochlorococcus marinus (strain MIT 9211).